Here is a 207-residue protein sequence, read N- to C-terminus: ATP-dependent Clp protease proteolytic subunit (207 aa).

Positions 1–14 (MSYSGERDNLAPHM) are excised as a propeptide. Serine 111 functions as the Nucleophile in the catalytic mechanism. The active site involves histidine 136.

This sequence belongs to the peptidase S14 family. In terms of assembly, fourteen ClpP subunits assemble into 2 heptameric rings which stack back to back to give a disk-like structure with a central cavity, resembling the structure of eukaryotic proteasomes. Component of the ClpAP and ClpXP complexes.

The protein localises to the cytoplasm. The catalysed reaction is Hydrolysis of proteins to small peptides in the presence of ATP and magnesium. alpha-casein is the usual test substrate. In the absence of ATP, only oligopeptides shorter than five residues are hydrolyzed (such as succinyl-Leu-Tyr-|-NHMec, and Leu-Tyr-Leu-|-Tyr-Trp, in which cleavage of the -Tyr-|-Leu- and -Tyr-|-Trp bonds also occurs).. Its function is as follows. Cleaves peptides in various proteins in a process that requires ATP hydrolysis. Has a chymotrypsin-like activity. Plays a major role in the degradation of misfolded proteins. In Salmonella paratyphi A (strain ATCC 9150 / SARB42), this protein is ATP-dependent Clp protease proteolytic subunit.